The sequence spans 381 residues: Dual-specificity RNA methyltransferase RlmN (381 aa).

The Proton acceptor role is filled by Glu86. The 234-residue stretch at 105–338 (RHARYTICVS…CTIRQSKGLD (234 aa)) folds into the Radical SAM core domain. Cys112 and Cys343 are oxidised to a cystine. 3 residues coordinate [4Fe-4S] cluster: Cys119, Cys123, and Cys126. S-adenosyl-L-methionine is bound by residues 169-170 (GE), Ser201, 224-226 (SLH), and Asn300. The S-methylcysteine intermediate role is filled by Cys343. Residues 351-381 (ENPKFRANVSGNSAAKTEEKPTNDKTNVSKK) are disordered.

Belongs to the radical SAM superfamily. RlmN family. Requires [4Fe-4S] cluster as cofactor.

Its subcellular location is the cytoplasm. The enzyme catalyses adenosine(2503) in 23S rRNA + 2 reduced [2Fe-2S]-[ferredoxin] + 2 S-adenosyl-L-methionine = 2-methyladenosine(2503) in 23S rRNA + 5'-deoxyadenosine + L-methionine + 2 oxidized [2Fe-2S]-[ferredoxin] + S-adenosyl-L-homocysteine. It carries out the reaction adenosine(37) in tRNA + 2 reduced [2Fe-2S]-[ferredoxin] + 2 S-adenosyl-L-methionine = 2-methyladenosine(37) in tRNA + 5'-deoxyadenosine + L-methionine + 2 oxidized [2Fe-2S]-[ferredoxin] + S-adenosyl-L-homocysteine. In terms of biological role, specifically methylates position 2 of adenine 2503 in 23S rRNA and position 2 of adenine 37 in tRNAs. m2A2503 modification seems to play a crucial role in the proofreading step occurring at the peptidyl transferase center and thus would serve to optimize ribosomal fidelity. The polypeptide is Dual-specificity RNA methyltransferase RlmN (Campylobacter concisus (strain 13826)).